The sequence spans 266 residues: UPF0294 protein YafD (266 aa).

Belongs to the UPF0294 family.

The protein resides in the cytoplasm. The polypeptide is UPF0294 protein YafD (Salmonella typhi).